The sequence spans 473 residues: MAQAAAAPADNTKKLWGGRFTGKTDPLMEKFNESLPFDKRLWAEDIKGSQAYAKALAKAGILAHDEAVTIVEGLAKVAEEWKAGAFVIKAGDEDIHTANERRLTELVGAVGGKLHTGRSRNDQVATDYRLWLVGQVEVMRSEVGELMRVAADRSEAEVEVLMPGFTHLQNAMTVRWSHWLMSHAAAWQRDDMRLRDLLPRVATLPLGSGALAGNPFLVDRQFIAKELGFGGGVCPNSMDAVSDRDFVIETVFAASLLCVHLSRWAEDLIIYSSGPFGYVQCSDAYATGSSLMPQKKNPDALELIRGKGGRVQGNLMGVMAVLKGTPTTYNKDFQECWELLFDTVDTVHDVVRIATGVLSTLRIKPDRMKAGLSADMLATDLAEYLVRKGVPFRETHHHSGAAVKMAEDRGCTLFDLTVDDLKTIHPLFTDDVAAVWDFNRSAEMRDTEGGTSKRSVLEQVQKMRTYLAAEGQH.

2-(N(omega)-L-arginino)succinate-binding residues include serine 34, asparagine 121, and threonine 166. Residue histidine 167 is the Proton acceptor of the active site. Catalysis depends on serine 289, which acts as the Proton donor. Asparagine 297, tyrosine 329, and glutamine 334 together coordinate 2-(N(omega)-L-arginino)succinate.

It belongs to the lyase 1 family. Argininosuccinate lyase subfamily.

The catalysed reaction is 2-(N(omega)-L-arginino)succinate = fumarate + L-arginine. The protein operates within amino-acid biosynthesis; L-arginine biosynthesis; L-arginine from L-ornithine and carbamoyl phosphate: step 3/3. The protein is Argininosuccinate lyase (ARG7) of Chlamydomonas reinhardtii (Chlamydomonas smithii).